Here is a 253-residue protein sequence, read N- to C-terminus: Phosphate import ATP-binding protein PstB (253 aa).

An ABC transporter domain is found at 7–248 (MHSKGLDFFY…PGNKQTEDYI (242 aa)). 39-46 (GPSGCGKS) is a binding site for ATP.

It belongs to the ABC transporter superfamily. Phosphate importer (TC 3.A.1.7) family. The complex is composed of two ATP-binding proteins (PstB), two transmembrane proteins (PstC and PstA) and a solute-binding protein (PstS).

The protein localises to the cell inner membrane. It catalyses the reaction phosphate(out) + ATP + H2O = ADP + 2 phosphate(in) + H(+). Part of the ABC transporter complex PstSACB involved in phosphate import. Responsible for energy coupling to the transport system. The sequence is that of Phosphate import ATP-binding protein PstB from Oleidesulfovibrio alaskensis (strain ATCC BAA-1058 / DSM 17464 / G20) (Desulfovibrio alaskensis).